Here is a 208-residue protein sequence, read N- to C-terminus: Small ribosomal subunit protein uS5 (208 aa).

A compositionally biased stretch (polar residues) spans 1 to 15 (MTDSNNQSPNKKTSG). Residues 1–54 (MTDSNNQSPNKKTSGSSSAPPAADGRQENRRSRGEKRGGRRDRRGQERDSEWQE) form a disordered region. Basic and acidic residues-rich tracts occupy residues 25–37 (GRQE…GEKR) and 44–54 (RGQERDSEWQE). The region spanning 52-115 (WQERVVQIRR…ADGKKHLVRV (64 aa)) is the S5 DRBM domain.

It belongs to the universal ribosomal protein uS5 family. In terms of assembly, part of the 30S ribosomal subunit. Contacts proteins S4 and S8.

Its function is as follows. With S4 and S12 plays an important role in translational accuracy. Located at the back of the 30S subunit body where it stabilizes the conformation of the head with respect to the body. This chain is Small ribosomal subunit protein uS5, found in Prochlorococcus marinus (strain NATL2A).